Here is a 136-residue protein sequence, read N- to C-terminus: NADH-quinone oxidoreductase subunit A (136 aa).

3 consecutive transmembrane segments (helical) span residues 20-40, 70-90, and 99-119; these read LAVYAVLVAAFVAVQLFVAWW, VPFYLVAIFFLIFDMEGAYIL, and LGWAGWLQMSFFIGLLLVGLV.

It belongs to the complex I subunit 3 family. In terms of assembly, NDH-1 is composed of 14 different subunits. Subunits NuoA, H, J, K, L, M, N constitute the membrane sector of the complex.

It localises to the cell inner membrane. The enzyme catalyses a quinone + NADH + 5 H(+)(in) = a quinol + NAD(+) + 4 H(+)(out). In terms of biological role, NDH-1 shuttles electrons from NADH, via FMN and iron-sulfur (Fe-S) centers, to quinones in the respiratory chain. The immediate electron acceptor for the enzyme in this species is believed to be ubiquinone. Couples the redox reaction to proton translocation (for every two electrons transferred, four hydrogen ions are translocated across the cytoplasmic membrane), and thus conserves the redox energy in a proton gradient. The sequence is that of NADH-quinone oxidoreductase subunit A from Syntrophobacter fumaroxidans (strain DSM 10017 / MPOB).